Consider the following 287-residue polypeptide: Protease HtpX (287 aa).

A run of 2 helical transmembrane segments spans residues 4–24 (VFLL…VMSI) and 33–53 (GGLL…SLAI). Zn(2+) is bound at residue H139. Residue E140 is part of the active site. Residue H143 coordinates Zn(2+). Helical transmembrane passes span 154-174 (LIQG…AGII) and 195-215 (GVVF…VAYF). E220 contributes to the Zn(2+) binding site.

Belongs to the peptidase M48B family. It depends on Zn(2+) as a cofactor.

It is found in the cell inner membrane. This chain is Protease HtpX, found in Shewanella denitrificans (strain OS217 / ATCC BAA-1090 / DSM 15013).